The primary structure comprises 477 residues: Bifunctional protein HldE (477 aa).

The tract at residues 1–320 is ribokinase; the sequence is MKDSLPAFEK…SLSDTHHSET (320 aa). An ATP-binding site is contributed by 195–198; the sequence is NLHE. Asp264 is an active-site residue. A cytidylyltransferase region spans residues 346–477; the sequence is MTNGCFDILH…KIIENIMANQ (132 aa).

In the N-terminal section; belongs to the carbohydrate kinase PfkB family. It in the C-terminal section; belongs to the cytidylyltransferase family. As to quaternary structure, homodimer.

The catalysed reaction is D-glycero-beta-D-manno-heptose 7-phosphate + ATP = D-glycero-beta-D-manno-heptose 1,7-bisphosphate + ADP + H(+). The enzyme catalyses D-glycero-beta-D-manno-heptose 1-phosphate + ATP + H(+) = ADP-D-glycero-beta-D-manno-heptose + diphosphate. It functions in the pathway nucleotide-sugar biosynthesis; ADP-L-glycero-beta-D-manno-heptose biosynthesis; ADP-L-glycero-beta-D-manno-heptose from D-glycero-beta-D-manno-heptose 7-phosphate: step 1/4. The protein operates within nucleotide-sugar biosynthesis; ADP-L-glycero-beta-D-manno-heptose biosynthesis; ADP-L-glycero-beta-D-manno-heptose from D-glycero-beta-D-manno-heptose 7-phosphate: step 3/4. Its function is as follows. Catalyzes the phosphorylation of D-glycero-D-manno-heptose 7-phosphate at the C-1 position to selectively form D-glycero-beta-D-manno-heptose-1,7-bisphosphate. Functionally, catalyzes the ADP transfer from ATP to D-glycero-beta-D-manno-heptose 1-phosphate, yielding ADP-D-glycero-beta-D-manno-heptose. This is Bifunctional protein HldE from Shewanella piezotolerans (strain WP3 / JCM 13877).